A 122-amino-acid chain; its full sequence is Large ribosomal subunit protein bL12 (122 aa).

The protein belongs to the bacterial ribosomal protein bL12 family. Homodimer. Part of the ribosomal stalk of the 50S ribosomal subunit. Forms a multimeric L10(L12)X complex, where L10 forms an elongated spine to which 2 to 4 L12 dimers bind in a sequential fashion. Binds GTP-bound translation factors.

In terms of biological role, forms part of the ribosomal stalk which helps the ribosome interact with GTP-bound translation factors. Is thus essential for accurate translation. The chain is Large ribosomal subunit protein bL12 from Vibrio vulnificus (strain CMCP6).